Reading from the N-terminus, the 331-residue chain is UBX domain-containing protein 2B (331 aa).

2 disordered regions span residues 1 to 26 and 38 to 63; these read MAEG…SARD and EMKC…PPLR. Ala2 is modified (N-acetylalanine). The span at 38–48 shows a compositional bias: basic and acidic residues; the sequence is EMKCKSSKPDR. Phosphoserine is present on Ser56. The residue at position 59 (Thr59) is a Phosphothreonine. Ser66 is modified (phosphoserine). Residues 141–206 enclose the SEP domain; the sequence is DVQILLRLWS…MEDHQDQEYI (66 aa). Ser231, Ser234, and Ser235 each carry phosphoserine. Residues 252–329 form the UBX domain; the sequence is DSVPTTKIQI…DILNTVILQQ (78 aa).

The protein belongs to the NSFL1C family. Interacts with VCP. Does not bind ubiquitin. Present at high level in brain. Also present in liver, kidney, spleen, testis, lung and heart (at protein level).

It localises to the nucleus. The protein resides in the cytoplasm. It is found in the cytosol. Its subcellular location is the endoplasmic reticulum. The protein localises to the golgi apparatus. It localises to the cytoskeleton. The protein resides in the microtubule organizing center. It is found in the centrosome. Functionally, adapter protein required for Golgi and endoplasmic reticulum biogenesis. Involved in Golgi and endoplasmic reticulum maintenance during interphase and in their reassembly at the end of mitosis. The complex formed with VCP has membrane fusion activity; membrane fusion activity requires USO1-GOLGA2 tethering and BET1L. VCPIP1 is also required, but not its deubiquitinating activity. Together with NSFL1C/p47, regulates the centrosomal levels of kinase AURKA/Aurora A during mitotic progression by promoting AURKA removal from centrosomes in prophase. Also, regulates spindle orientation during mitosis. This chain is UBX domain-containing protein 2B (Ubxn2b), found in Rattus norvegicus (Rat).